The sequence spans 260 residues: MTNFTTSTPHDALFKSFLMHPDTARDFMEIHLPKDLRELCDLDSLKLESASFVDEKLRALHSDILWSVKTREGDGYIYVVIEHQSREDIHMAFRLMRYSMAVMQRHIEHDKRRPLPLVIPMLFYHGSRSPYPWSLCWLDEFADPTTARKLYNAAFPLVDITVVPDDEIVQHRRVALLELIQKHIRQRDLMGLIDQLVVLLVTECANDSQITALLNYILLTGDEERFNEFISELTSRMPQHRERIMTIAERIHNDDCRANS.

It belongs to the Rpn/YhgA-like nuclease family.

Its function is as follows. A low activity DNA endonuclease probably yielding 3'-hydroxyl ends. Involved in RecA-independent recombination and horizontal gene transfer. This chain is Recombination-promoting nuclease RpnD (rpnD), found in Escherichia coli O157:H7.